The chain runs to 695 residues: Follicle-stimulating hormone receptor (695 aa).

The signal sequence occupies residues 1–17 (MALLLVSLLAFLSLGSG). Intrachain disulfides connect cysteine 18/cysteine 25 and cysteine 23/cysteine 32. The 29-residue stretch at 18 to 46 (CHHRICHCSNRVFLCQESKVTEIPSDLPR) folds into the LRRNT domain. Residues 18–366 (CHHRICHCSN…EDIMGYNILR (349 aa)) lie on the Extracellular side of the membrane. 9 LRR repeats span residues 49 to 72 (IELR…FGDL), 73 to 97 (EKIE…LPKL), 98 to 118 (HEIR…AFQN), 119 to 143 (LPNL…KIHS), 144 to 169 (LQKV…VGLS), 170 to 192 (FESV…AFNG), 193 to 216 (TQLD…VFHG), 217 to 240 (ASGP…GLEN), and 241 to 259 (LKKL…PTLE). N-linked (GlcNAc...) asparagine glycosylation is found at asparagine 191 and asparagine 199. Disulfide bonds link cysteine 275/cysteine 346, cysteine 276/cysteine 292, cysteine 276/cysteine 356, and cysteine 292/cysteine 338. N-linked (GlcNAc...) asparagine glycosylation is found at asparagine 293 and asparagine 318. Tyrosine 335 carries the sulfotyrosine modification. A helical membrane pass occupies residues 367–387 (VLIWFISILAITGNIIVLVIL). Over 388-398 (TTSQYKLTVPR) the chain is Cytoplasmic. The helical transmembrane segment at 399–421 (FLMCNLAFADLCIGIYLLLIASV) threads the bilayer. The Extracellular segment spans residues 422–443 (DIHTKSQYHNYAIDWQTGAGCD). A disulfide bridge links cysteine 442 with cysteine 517. A helical transmembrane segment spans residues 444–465 (AAGFFTVFASELSVYTLTAITL). The Cytoplasmic portion of the chain corresponds to 466-485 (ERWHTITHAMQLDCKVQLRH). The helical transmembrane segment at 486 to 508 (AASVMVMGWIFAFAAALFPIFGI) threads the bilayer. Residues 509-528 (SSYMKVSICLPMDIDSPLSQ) lie on the Extracellular side of the membrane. Residues 529–550 (LYVMSLLVLNVLAFVVICGCYI) traverse the membrane as a helical segment. The Cytoplasmic segment spans residues 551 to 573 (HIYLTVRNPNIVSSSSDTRIAKR). The chain crosses the membrane as a helical span at residues 574-597 (MAMLIFTDFLCMAPISFFAISASL). At 598–608 (KVPLITVSKAK) the chain is on the extracellular side. The chain crosses the membrane as a helical span at residues 609 to 630 (ILLVLFHPINSCANPFLYAIFT). Residues 631–695 (KNFRRDFFIL…LVPLSHLAQN (65 aa)) lie on the Cytoplasmic side of the membrane.

It belongs to the G-protein coupled receptor 1 family. FSH/LSH/TSH subfamily. Homotrimer. Functions as a homotrimer binding the FSH hormone heterodimer composed of CGA and FSHB. Interacts with ARRB2. Interacts with APPL2; interaction is independent of follicle stimulating hormone stimulation. Post-translationally, sulfated. In terms of processing, N-glycosylated; indirectly required for FSH-binding, possibly via a conformational change that allows high affinity binding of hormone. In terms of tissue distribution, sertoli cells and ovarian granulosa cells.

Its subcellular location is the cell membrane. Its function is as follows. G protein-coupled receptor for follitropin, the follicle-stimulating hormone. Through cAMP production activates the downstream PI3K-AKT and ERK1/ERK2 signaling pathways. This chain is Follicle-stimulating hormone receptor (FSHR), found in Homo sapiens (Human).